An 80-amino-acid polypeptide reads, in one-letter code: Lantibiotic Flvalpha.b (80 aa).

A propeptide spans 1–38 (cleaved by FlvT); the sequence is MNKNPIYRSEEEAKNIACGNVAAELDENSQALDAINGA. T43 and T47 each carry 2,3-didehydrobutyrine; by FlvM1. A cross-link (beta-methyllanthionine (Thr-Cys); by FlvM1) is located at residues 52–55; the sequence is TVGC. Positions 58 to 68 form a cross-link, lanthionine (Ser-Cys); by FlvM1; the sequence is SYGLGNGGYCC. 2 cross-links (beta-methyllanthionine (Thr-Cys); by FlvM1) span residues 69-74 and 71-78; these read TYTVEC and TVECSKTC.

The lanthionine formed by Ser-58 and Cys-68 forms a putative lipid II binding motif. In terms of processing, maturation of FlvA1 peptides involves the enzymatic conversion of Thr, and Ser into dehydrated AA and the formation of thioether bonds with cysteines. Modifications are processed by the flavecin synthetase FlvM1. This is followed by membrane translocation and cleavage of the modified precursor. Post-translationally, contains DL-lanthionine and DL-beta-methyllanthionine, when coepressed in E.coli with the flavecin synthetase FlvM1.

Its subcellular location is the secreted. Functionally, lanthionine-containing peptide antibiotic (lantibiotic) only active on Gram-positive bacteria in synergy with Flvbeta peptides, which are encoded by the same operon than Flvalpha.a. Shows antibacterial activity in synergy with Flvbeta.b, Flvbeta.c, Flvbeta.e and Flvbeta.g. Does not show antibacterial activity when tested with Flvbeta.a, Flvbeta.d, Flvbeta.f and Flvbeta.h. The bactericidal activity of lantibiotics is based on depolarization of energized bacterial cytoplasmic membranes, initiated by the formation of aqueous transmembrane pores. This Ruminococcus flavefaciens protein is Lantibiotic Flvalpha.b.